Reading from the N-terminus, the 211-residue chain is Thiamine-phosphate synthase (211 aa).

Residues 37-41 (QLRIK) and Asn69 each bind 4-amino-2-methyl-5-(diphosphooxymethyl)pyrimidine. Positions 70 and 89 each coordinate Mg(2+). Residue Ser108 coordinates 4-amino-2-methyl-5-(diphosphooxymethyl)pyrimidine. Residue 134–136 (TQT) coordinates 2-[(2R,5Z)-2-carboxy-4-methylthiazol-5(2H)-ylidene]ethyl phosphate. A 4-amino-2-methyl-5-(diphosphooxymethyl)pyrimidine-binding site is contributed by Lys137. Residues Gly166 and 186 to 187 (VS) contribute to the 2-[(2R,5Z)-2-carboxy-4-methylthiazol-5(2H)-ylidene]ethyl phosphate site.

The protein belongs to the thiamine-phosphate synthase family. Mg(2+) serves as cofactor.

It carries out the reaction 2-[(2R,5Z)-2-carboxy-4-methylthiazol-5(2H)-ylidene]ethyl phosphate + 4-amino-2-methyl-5-(diphosphooxymethyl)pyrimidine + 2 H(+) = thiamine phosphate + CO2 + diphosphate. The enzyme catalyses 2-(2-carboxy-4-methylthiazol-5-yl)ethyl phosphate + 4-amino-2-methyl-5-(diphosphooxymethyl)pyrimidine + 2 H(+) = thiamine phosphate + CO2 + diphosphate. It catalyses the reaction 4-methyl-5-(2-phosphooxyethyl)-thiazole + 4-amino-2-methyl-5-(diphosphooxymethyl)pyrimidine + H(+) = thiamine phosphate + diphosphate. It participates in cofactor biosynthesis; thiamine diphosphate biosynthesis; thiamine phosphate from 4-amino-2-methyl-5-diphosphomethylpyrimidine and 4-methyl-5-(2-phosphoethyl)-thiazole: step 1/1. Its function is as follows. Condenses 4-methyl-5-(beta-hydroxyethyl)thiazole monophosphate (THZ-P) and 2-methyl-4-amino-5-hydroxymethyl pyrimidine pyrophosphate (HMP-PP) to form thiamine monophosphate (TMP). The protein is Thiamine-phosphate synthase of Enterobacter sp. (strain 638).